The sequence spans 247 residues: Ubiquinone biosynthesis O-methyltransferase (247 aa).

Arg-45, Gly-65, Asp-86, and Leu-130 together coordinate S-adenosyl-L-methionine.

Belongs to the methyltransferase superfamily. UbiG/COQ3 family.

It catalyses the reaction a 3-demethylubiquinol + S-adenosyl-L-methionine = a ubiquinol + S-adenosyl-L-homocysteine + H(+). The catalysed reaction is a 3-(all-trans-polyprenyl)benzene-1,2-diol + S-adenosyl-L-methionine = a 2-methoxy-6-(all-trans-polyprenyl)phenol + S-adenosyl-L-homocysteine + H(+). Its pathway is cofactor biosynthesis; ubiquinone biosynthesis. Its function is as follows. O-methyltransferase that catalyzes the 2 O-methylation steps in the ubiquinone biosynthetic pathway. This Alkalilimnicola ehrlichii (strain ATCC BAA-1101 / DSM 17681 / MLHE-1) protein is Ubiquinone biosynthesis O-methyltransferase.